Here is a 272-residue protein sequence, read N- to C-terminus: Dermonecrotic toxin SpeSicTox-betaIB2b (272 aa).

His5 is a catalytic residue. Residues Glu25 and Asp27 each contribute to the Mg(2+) site. His41 acts as the Nucleophile in catalysis. Disulfide bonds link Cys45–Cys51 and Cys47–Cys191. Position 85 (Asp85) interacts with Mg(2+).

Belongs to the arthropod phospholipase D family. Class II subfamily. Mg(2+) is required as a cofactor. As to expression, expressed by the venom gland.

The protein localises to the secreted. It carries out the reaction an N-(acyl)-sphingosylphosphocholine = an N-(acyl)-sphingosyl-1,3-cyclic phosphate + choline. The enzyme catalyses an N-(acyl)-sphingosylphosphoethanolamine = an N-(acyl)-sphingosyl-1,3-cyclic phosphate + ethanolamine. It catalyses the reaction a 1-acyl-sn-glycero-3-phosphocholine = a 1-acyl-sn-glycero-2,3-cyclic phosphate + choline. The catalysed reaction is a 1-acyl-sn-glycero-3-phosphoethanolamine = a 1-acyl-sn-glycero-2,3-cyclic phosphate + ethanolamine. Functionally, dermonecrotic toxins cleave the phosphodiester linkage between the phosphate and headgroup of certain phospholipids (sphingolipid and lysolipid substrates), forming an alcohol (often choline) and a cyclic phosphate. This toxin acts on sphingomyelin (SM). It may also act on ceramide phosphoethanolamine (CPE), lysophosphatidylcholine (LPC) and lysophosphatidylethanolamine (LPE), but not on lysophosphatidylserine (LPS), and lysophosphatidylglycerol (LPG). It acts by transphosphatidylation, releasing exclusively cyclic phosphate products as second products. Induces dermonecrosis, hemolysis, increased vascular permeability, edema, inflammatory response, and platelet aggregation. The polypeptide is Dermonecrotic toxin SpeSicTox-betaIB2b (Sicarius peruensis (Six-eyed sand spider)).